The primary structure comprises 643 residues: Zinc finger protein 64 (643 aa).

11 consecutive C2H2-type zinc fingers follow at residues 173-195 (HKCE…MRCH), 201-223 (YKCK…LRIH), 229-251 (FKCQ…LRSH), 297-322 (FNCR…LRIH), 328-350 (HKCE…MRCH), 356-378 (HKCH…LRIH), 384-406 (YKCQ…LRSH), 412-434 (FQCW…MIVH), 440-463 (FKCE…RIKH), 465-487 (FKCL…SRLH), and 493-515 (EKCP…SRVH). 8 residues coordinate Zn(2+): Cys495, Cys498, His511, His515, Cys523, Cys526, His539, and His544. Residues 538-552 (KHIDKVHREGAKTEN) show a composition bias toward basic and acidic residues. The interval 538–571 (KHIDKVHREGAKTENRAPPGKDGPGESGPHHVPN) is disordered. The segment at 578–600 (FGCDKCGASFVRDDSLRCHRKQH) adopts a C2H2-type 12 zinc-finger fold.

It belongs to the krueppel C2H2-type zinc-finger protein family. Interacts with NOTCH1. In terms of tissue distribution, widely expressed. Expressed in the brain, spleen, liver, and heart.

It is found in the nucleus. May be involved in the regulation of mesenchymal cell differentiation through transactivation of NOTCH1 target genes. The chain is Zinc finger protein 64 from Mus musculus (Mouse).